A 421-amino-acid chain; its full sequence is CinA-like protein (421 aa).

Belongs to the CinA family.

In Synechococcus elongatus (strain ATCC 33912 / PCC 7942 / FACHB-805) (Anacystis nidulans R2), this protein is CinA-like protein.